The primary structure comprises 419 residues: N-acylglucosamine 2-epimerase (419 aa).

Residues leucine 185 to leucine 206 are leucine-zipper. Serine 418 carries the post-translational modification Phosphoserine.

It belongs to the N-acylglucosamine 2-epimerase family. Homodimer. Forms a heterodimer with renin and inhibits its activity. As to expression, kidney, adrenal gland, brain, lung, spleen, ovary, testis and heart.

The catalysed reaction is an N-acyl-D-glucosamine = an N-acyl-D-mannosamine. It participates in amino-sugar metabolism; N-acetylneuraminate degradation. Functionally, catalyzes the interconversion of N-acetylglucosamine to N-acetylmannosamine. Involved in the N-glycolylneuraminic acid (Neu5Gc) degradation pathway. The protein is N-acylglucosamine 2-epimerase (Renbp) of Rattus norvegicus (Rat).